An 839-amino-acid polypeptide reads, in one-letter code: Taste receptor type 1 member 2 (839 aa).

A signal peptide spans M1–A19. Over E20–T566 the chain is Extracellular. N-linked (GlcNAc...) asparagine glycans are attached at residues N84, N127, N248, N292, N312, N368, N428, N487, and N527. A helical membrane pass occupies residues I567–F587. Residues W588–P602 lie on the Cytoplasmic side of the membrane. The helical transmembrane segment at M603–G623 threads the bilayer. Residues P624 to A635 lie on the Extracellular side of the membrane. Residues L636–V656 traverse the membrane as a helical segment. Topologically, residues C657–S681 are cytoplasmic. A helical membrane pass occupies residues M682–L702. Over N703–S727 the chain is Extracellular. Residues L728–M748 form a helical membrane-spanning segment. Residues G749–K760 lie on the Cytoplasmic side of the membrane. A helical transmembrane segment spans residues F761–S781. At A782–N784 the chain is on the extracellular side. Residues G785–L805 form a helical membrane-spanning segment. The Cytoplasmic segment spans residues G806 to D839.

Belongs to the G-protein coupled receptor 3 family. TAS1R subfamily. In terms of assembly, forms heterodimers with TAS1R3.

The protein resides in the cell membrane. Functionally, putative taste receptor. TAS1R2/TAS1R3 recognizes diverse natural and synthetic sweeteners. The chain is Taste receptor type 1 member 2 (TAS1R2) from Macaca mulatta (Rhesus macaque).